Here is a 445-residue protein sequence, read N- to C-terminus: Phosphoglucosamine mutase (445 aa).

Ser-102 (phosphoserine intermediate) is an active-site residue. Mg(2+) is bound by residues Ser-102, Asp-241, Asp-243, and Asp-245. Residue Ser-102 is modified to Phosphoserine.

This sequence belongs to the phosphohexose mutase family. Requires Mg(2+) as cofactor. In terms of processing, activated by phosphorylation.

The catalysed reaction is alpha-D-glucosamine 1-phosphate = D-glucosamine 6-phosphate. Its function is as follows. Catalyzes the conversion of glucosamine-6-phosphate to glucosamine-1-phosphate. This chain is Phosphoglucosamine mutase, found in Shigella dysenteriae serotype 1 (strain Sd197).